Reading from the N-terminus, the 265-residue chain is MSDMITAAILGLVEGLTEFLPVSSTGHLIITGELLGFTGPKAATFEVAIQLGAILAVVVLYWDRFWGLLRPQPYVRFAGLRGIMLLLLTSLPASVLGLAAHSTIKAHLFTPSTVAIALAVGAIFMLLVERRTERPRYMTLDEMSPALALGIGCFQCLALWPGFSRSAATIMGGMLLGARRGLAAEYSFIAAVPIMFAATGYDLLKSWTLFTPADLPFFATGFVVSFLSAWAAVKLFIALVGRMTFRPFAWYRLAIAPLVYYFMAY.

7 consecutive transmembrane segments (helical) span residues 42–62, 82–102, 108–128, 143–163, 181–201, 221–241, and 248–264; these read AATF…VLYW, GIML…AAHS, LFTP…MLLV, MSPA…WPGF, GLAA…ATGY, GFVV…ALVG, and FAWY…YFMA.

It belongs to the UppP family.

It localises to the cell inner membrane. The enzyme catalyses di-trans,octa-cis-undecaprenyl diphosphate + H2O = di-trans,octa-cis-undecaprenyl phosphate + phosphate + H(+). Functionally, catalyzes the dephosphorylation of undecaprenyl diphosphate (UPP). Confers resistance to bacitracin. The chain is Undecaprenyl-diphosphatase from Nitratidesulfovibrio vulgaris (strain DP4) (Desulfovibrio vulgaris).